Reading from the N-terminus, the 137-residue chain is Large ribosomal subunit protein uL16 (137 aa).

The protein belongs to the universal ribosomal protein uL16 family. Part of the 50S ribosomal subunit.

Binds 23S rRNA and is also seen to make contacts with the A and possibly P site tRNAs. This Rhodopseudomonas palustris (strain BisA53) protein is Large ribosomal subunit protein uL16.